A 259-amino-acid chain; its full sequence is Dickkopf-related protein 2 (259 aa).

Residues 1–33 (MAALMRSKDSSCCLLLLAAVLMVESSQIGSSRA) form the signal peptide. Residue Asn52 is glycosylated (N-linked (GlcNAc...) asparagine). A DKK-type Cys-1 region spans residues 78–127 (CSSDKECEVGRYCHSPHQGSSACMVCRRKKKRCHRDGMCCPSTRCNNGIC). 5 cysteine pairs are disulfide-bonded: Cys183–Cys195, Cys189–Cys204, Cys194–Cys231, Cys214–Cys239, and Cys233–Cys256. Residues 183-256 (CLRSSDCIEG…YSSKARLHVC (74 aa)) are DKK-type Cys-2.

It belongs to the dickkopf family. As to quaternary structure, interacts with LRP5 and LRP6. In terms of processing, may be proteolytically processed by a furin-like protease. Expressed in heart, brain, skeletal muscle and lung.

It is found in the secreted. Functionally, antagonizes canonical Wnt signaling by inhibiting LRP5/6 interaction with Wnt and by forming a ternary complex with the transmembrane protein KREMEN that promotes internalization of LRP5/6. DKKs play an important role in vertebrate development, where they locally inhibit Wnt regulated processes such as antero-posterior axial patterning, limb development, somitogenesis and eye formation. In the adult, Dkks are implicated in bone formation and bone disease, cancer and Alzheimer disease. The chain is Dickkopf-related protein 2 (DKK2) from Homo sapiens (Human).